Here is a 284-residue protein sequence, read N- to C-terminus: UPF0761 membrane protein IL2447 (284 aa).

Helical transmembrane passes span 41 to 61 (MLSL…FPMF), 98 to 118 (MTAI…SAID), 137 to 157 (FAVY…GLAA), 178 to 198 (FVLW…MYQL), 214 to 234 (VIAA…ITFF), and 247 to 267 (IPIL…GAVL).

This sequence belongs to the UPF0761 family.

It localises to the cell inner membrane. This Idiomarina loihiensis (strain ATCC BAA-735 / DSM 15497 / L2-TR) protein is UPF0761 membrane protein IL2447.